Reading from the N-terminus, the 34-residue chain is uncharacterized protein (34 aa).

This is an uncharacterized protein from Treponema pallidum (strain Nichols).